The chain runs to 309 residues: MQCIETNNLQQLLEQVKPYTKKGKLATYIPELGNANPNDLGIAIFHKETEYIHAGNSQTLFTLQSISKVITLALALLDRGEEYVFSKVGMEPTGDPFNSIIKLETTSSSKPLNPMINAGALAITSMLAGNDNEEKMERILQFVRDITDNPTISYSSKVATSELETAYLNRSLCYYMKQNGIIDNDIEELMDLYTRQCAIEVNCIDLARIGLIFAMDGYDPYKKKQIIPKHITKICKTFMVTCGMYNESGEFAIRVGIPAKSGVAGGIFGCVKGEMGIGIFGPALDANGNSIAGFKILELLSAQEGWSMF.

Substrate contacts are provided by S65, N117, E162, N169, Y193, Y245, and V263.

The protein belongs to the glutaminase family. Homotetramer.

It catalyses the reaction L-glutamine + H2O = L-glutamate + NH4(+). This chain is Glutaminase, found in Bacillus mycoides (strain KBAB4) (Bacillus weihenstephanensis).